The chain runs to 152 residues: Transposase for insertion sequence element IS200 (152 aa).

Positions 61 and 63 each coordinate Mg(2+). Residue tyrosine 125 is the Nucleophile of the active site. Position 129 (glutamine 129) interacts with Mg(2+).

It belongs to the transposase 17 family. In terms of assembly, homodimer. It depends on Mg(2+) as a cofactor.

Transposase responsible for transposition of the IS200 insertion sequence (IS) element. Transposition occurs in 2 main steps, excision from the donor DNA 'top strand' into a single strand circle and its subsequent reinsertion into the DNA target. This increases the copy number of the IS. In Salmonella typhi, this protein is Transposase for insertion sequence element IS200 (tnpA1).